A 493-amino-acid polypeptide reads, in one-letter code: V-type proton ATPase subunit B (493 aa).

Belongs to the ATPase alpha/beta chains family. V-ATPase is a heteromultimeric enzyme composed of a peripheral catalytic V1 complex (main components: subunits A, B, C, D, E, and F) attached to an integral membrane V0 proton pore complex (main component: the proteolipid protein).

The protein resides in the cytoplasmic vesicle membrane. The protein localises to the endosome membrane. Its subcellular location is the contractile vacuole membrane. Functionally, vacuolar ATPase is responsible for acidifying a variety of intracellular compartments in eukaryotic cells. The B subunit is non-catalytic but combines with other subunits to form the catalytic complex. V-ATPase is responsible for energizing electrophoretic K(+)/2H(+) antiport by generating a transmembrane voltage of more than 200 mV. The polypeptide is V-type proton ATPase subunit B (vatB) (Dictyostelium discoideum (Social amoeba)).